A 557-amino-acid polypeptide reads, in one-letter code: Nicotinate phosphoribosyltransferase 2 (557 aa).

Y31 and T219 together coordinate nicotinate. H222 bears the Phosphohistidine mark. R329 contacts nicotinate. 5-phospho-alpha-D-ribose 1-diphosphate is bound at residue T391.

The protein belongs to the NAPRTase family. Mg(2+) serves as cofactor. Mn(2+) is required as a cofactor. Transiently phosphorylated on a His residue during the reaction cycle. Phosphorylation strongly increases the affinity for substrates and increases the rate of nicotinate D-ribonucleotide production. Dephosphorylation regenerates the low-affinity form of the enzyme, leading to product release.

It catalyses the reaction nicotinate + 5-phospho-alpha-D-ribose 1-diphosphate + ATP + H2O = nicotinate beta-D-ribonucleotide + ADP + phosphate + diphosphate. It functions in the pathway cofactor biosynthesis; NAD(+) biosynthesis; nicotinate D-ribonucleotide from nicotinate: step 1/1. Functionally, catalyzes the first step in the biosynthesis of NAD from nicotinic acid, the ATP-dependent synthesis of beta-nicotinate D-ribonucleotide from nicotinate and 5-phospho-D-ribose 1-phosphate. Helps prevent cellular oxidative stress via its role in NAD biosynthesis. The chain is Nicotinate phosphoribosyltransferase 2 from Arabidopsis thaliana (Mouse-ear cress).